The sequence spans 106 residues: Large ribosomal subunit protein eL42 (106 aa).

This sequence belongs to the eukaryotic ribosomal protein eL42 family.

In Debaryomyces hansenii (strain ATCC 36239 / CBS 767 / BCRC 21394 / JCM 1990 / NBRC 0083 / IGC 2968) (Yeast), this protein is Large ribosomal subunit protein eL42 (RPL44).